Here is a 317-residue protein sequence, read N- to C-terminus: Insulin-like growth factor-binding protein 2 (317 aa).

Residues 1 to 33 form the signal peptide; it reads MQPRLGGPALLLLPPLLLLLLLGAGGGDCGARA. Positions 35-126 constitute an IGFBP N-terminal domain; the sequence is VLFRCPPCTP…VHGEGTCEKH (92 aa). 6 disulfide bridges follow: C39/C76, C42/C78, C50/C79, C68/C82, C90/C103, and C97/C123. 2 disordered regions span residues 125-151 and 189-218; these read KHGD…GGQV and EQHR…ARTP. In terms of domain architecture, Thyroglobulin type-1 spans 216-298; sequence RTPCQQELDQ…APTIRGDPEC (83 aa). 3 disulfides stabilise this stretch: C219–C253, C264–C275, and C277–C298. The Cell attachment site motif lies at 293–295; sequence RGD.

As to quaternary structure, interacts with IGF1. Interacts with IGF2. Interacts (via RGD motif) with integrin alpha5/ITGA5; this interaction induces cell migration, adhesion or apoptosis according to the context. Interacts with PTPRB; this interaction leads to PTPRB dimerization and inactivation. In terms of processing, cleaved by MMP9 leading to release of free IGF2 from IGFBP2-IGF2 complex, which contributes to enhance the motility and the growth of astrocytes. Post-translationally, O-glycosylated. As to expression, expressed in abundance in selected adult tissues, namely liver, kidney, adrenal, pituitary and choroid plexus.

The protein resides in the secreted. Its function is as follows. Multifunctional protein that plays a critical role in regulating the availability of IGFs such as IGF1 and IGF2 to their receptors and thereby regulates IGF-mediated cellular processes including proliferation, differentiation, and apoptosis in a cell-type specific manner. Functions coordinately with receptor protein tyrosine phosphatase beta/PTPRB and the IGF1 receptor to regulate IGF1-mediated signaling by stimulating the phosphorylation of PTEN leading to its inactivation and AKT1 activation. Plays a positive role in cell migration via interaction with integrin alpha5/ITGA5 through an RGD motif. Additionally, interaction with ITGA5/ITGB1 enhances the adhesion of endothelial progenitor cells to endothelial cells. Upon mitochondrial damage, facilitates apoptosis with ITGA5 of podocytes, and then activates the phosphorylation of focal adhesion kinase (FAK)-mediated mitochondrial injury. This is Insulin-like growth factor-binding protein 2 (IGFBP2) from Ovis aries (Sheep).